The primary structure comprises 320 residues: Mitochondrial thiamine pyrophosphate carrier 1 (320 aa).

Solcar repeat units follow at residues 12–110, 119–205, and 213–308; these read GTRR…TTQA, PQPV…LRPS, and PFGS…TLRA. The next 6 helical transmembrane spans lie at 17-35, 91-107, 125-145, 180-197, 219-239, and 283-300; these read VVLA…VAPL, LMYV…YRTT, FVAG…LDLL, GCSA…LFFA, ALAG…LDLV, and GLTV…VTMW.

It belongs to the mitochondrial carrier (TC 2.A.29) family.

The protein localises to the mitochondrion inner membrane. Its function is as follows. Mitochondrial transporter that mediates uptake of thiamine pyrophosphate (ThPP) into mitochondria. This chain is Mitochondrial thiamine pyrophosphate carrier 1 (tpc1), found in Aspergillus terreus (strain NIH 2624 / FGSC A1156).